Consider the following 250-residue polypeptide: MERRLVNSTSQSKTESAQQDAGKAVVLLSGGLDSATCVAIARDQGFEVHAISFRYGQRHDGELDRAAKQASLMGVVSHRVIDIDLAQLGGSALVDSSIAVPKSDHVDKIAGDIPVTYVPARNTIFLSYALAVAETLGSRDIFIGVNALDYSGYPDCRPEFIDAFQTMARLATKAGVEDEHSLTIHTPLLHWTKAEIIQRGIELGVDYSQTLSCYDPQGSSDEMRPCGQCDACLLRAKGFAENEIADPAIG.

28-38 (LSGGLDSATCV) contributes to the ATP binding site. Zn(2+) is bound by residues cysteine 213, cysteine 226, cysteine 229, and cysteine 232.

It belongs to the QueC family. It depends on Zn(2+) as a cofactor.

The enzyme catalyses 7-carboxy-7-deazaguanine + NH4(+) + ATP = 7-cyano-7-deazaguanine + ADP + phosphate + H2O + H(+). It functions in the pathway purine metabolism; 7-cyano-7-deazaguanine biosynthesis. Functionally, catalyzes the ATP-dependent conversion of 7-carboxy-7-deazaguanine (CDG) to 7-cyano-7-deazaguanine (preQ(0)). The chain is 7-cyano-7-deazaguanine synthase from Rhodopirellula baltica (strain DSM 10527 / NCIMB 13988 / SH1).